A 131-amino-acid chain; its full sequence is Profilin-2 (131 aa).

It belongs to the profilin family. Occurs in many kinds of cells as a complex with monomeric actin in a 1:1 ratio. As to expression, expressed in the intestinal wall, the spermatheca, and the pharynx.

Its subcellular location is the cytoplasm. It localises to the cytoskeleton. Binds to actin and affects the structure of the cytoskeleton. At high concentrations, profilin prevents the polymerization of actin, whereas it enhances it at low concentrations. By binding to PIP2, it inhibits the formation of IP3 and DG. The chain is Profilin-2 (pfn-2) from Caenorhabditis elegans.